The primary structure comprises 393 residues: Bifunctional enzyme IspD/IspF (393 aa).

A 2-C-methyl-D-erythritol 4-phosphate cytidylyltransferase region spans residues 1–234 (MTTSQRTAAI…ARLAASLGDI (234 aa)). Residues 235–393 (RTGTGYDVHA…SATIRLPWGA (159 aa)) are 2-C-methyl-D-erythritol 2,4-cyclodiphosphate synthase. A divalent metal cation is bound by residues aspartate 241 and histidine 243. Residues 241-243 (DVH) and 267-268 (HS) contribute to the 4-CDP-2-C-methyl-D-erythritol 2-phosphate site. Histidine 275 provides a ligand contact to a divalent metal cation. 4-CDP-2-C-methyl-D-erythritol 2-phosphate contacts are provided by residues 289 to 291 (DIG), 365 to 368 (TTSE), phenylalanine 372, and arginine 375.

This sequence in the N-terminal section; belongs to the IspD/TarI cytidylyltransferase family. IspD subfamily. The protein in the C-terminal section; belongs to the IspF family. The cofactor is a divalent metal cation.

It carries out the reaction 2-C-methyl-D-erythritol 4-phosphate + CTP + H(+) = 4-CDP-2-C-methyl-D-erythritol + diphosphate. The catalysed reaction is 4-CDP-2-C-methyl-D-erythritol 2-phosphate = 2-C-methyl-D-erythritol 2,4-cyclic diphosphate + CMP. Its pathway is isoprenoid biosynthesis; isopentenyl diphosphate biosynthesis via DXP pathway; isopentenyl diphosphate from 1-deoxy-D-xylulose 5-phosphate: step 2/6. The protein operates within isoprenoid biosynthesis; isopentenyl diphosphate biosynthesis via DXP pathway; isopentenyl diphosphate from 1-deoxy-D-xylulose 5-phosphate: step 4/6. In terms of biological role, bifunctional enzyme that catalyzes the formation of 4-diphosphocytidyl-2-C-methyl-D-erythritol from CTP and 2-C-methyl-D-erythritol 4-phosphate (MEP) (IspD), and catalyzes the conversion of 4-diphosphocytidyl-2-C-methyl-D-erythritol 2-phosphate (CDP-ME2P) to 2-C-methyl-D-erythritol 2,4-cyclodiphosphate (ME-CPP) with a corresponding release of cytidine 5-monophosphate (CMP) (IspF). In Bradyrhizobium sp. (strain ORS 278), this protein is Bifunctional enzyme IspD/IspF.